A 603-amino-acid polypeptide reads, in one-letter code: Phosphoenolpyruvate carboxykinase [GTP] (603 aa).

Substrate-binding positions include Arg87 and 209–211 (YAG). Residues Lys218 and His237 each coordinate Mn(2+). Ser258 serves as a coordination point for substrate. 259 to 264 (GSGKTS) is a GTP binding site. Ser260 is a catalytic residue. Asp275 contributes to the Mn(2+) binding site. 365–367 (NAR) is a binding site for substrate. The GTP site is built by Arg367 and Arg398.

The protein belongs to the phosphoenolpyruvate carboxykinase [GTP] family. It depends on Mn(2+) as a cofactor.

The protein resides in the cytoplasm. It catalyses the reaction oxaloacetate + GTP = phosphoenolpyruvate + GDP + CO2. It participates in carbohydrate biosynthesis; gluconeogenesis. Functionally, catalyzes the conversion of oxaloacetate (OAA) to phosphoenolpyruvate (PEP), the rate-limiting step in the metabolic pathway that produces glucose from lactate and other precursors derived from the citric acid cycle. In Saccharolobus solfataricus (strain ATCC 35092 / DSM 1617 / JCM 11322 / P2) (Sulfolobus solfataricus), this protein is Phosphoenolpyruvate carboxykinase [GTP].